Here is a 222-residue protein sequence, read N- to C-terminus: Probable translocation protein y4yL (222 aa).

The next 4 membrane-spanning stretches (helical) occupy residues 6–26, 52–72, 158–178, and 182–202; these read PAIL…LAVV, PNIV…APVA, IGFL…TILM, and MSMV…FVAI.

Belongs to the FliP/MopC/SpaP family.

It localises to the cell membrane. Could be involved in the secretion of an unknown factor. The chain is Probable translocation protein y4yL from Sinorhizobium fredii (strain NBRC 101917 / NGR234).